The chain runs to 500 residues: Probable malate:quinone oxidoreductase (500 aa).

It belongs to the MQO family. FAD serves as cofactor.

It catalyses the reaction (S)-malate + a quinone = a quinol + oxaloacetate. The protein operates within carbohydrate metabolism; tricarboxylic acid cycle; oxaloacetate from (S)-malate (quinone route): step 1/1. This chain is Probable malate:quinone oxidoreductase, found in Prochlorococcus marinus (strain MIT 9211).